A 242-amino-acid polypeptide reads, in one-letter code: Biosynthetic peptidoglycan transglycosylase (242 aa).

The helical transmembrane segment at 19-39 (ILAALAVFWGGGIALFSVVPV) threads the bilayer.

It belongs to the glycosyltransferase 51 family.

It is found in the cell inner membrane. It catalyses the reaction [GlcNAc-(1-&gt;4)-Mur2Ac(oyl-L-Ala-gamma-D-Glu-L-Lys-D-Ala-D-Ala)](n)-di-trans,octa-cis-undecaprenyl diphosphate + beta-D-GlcNAc-(1-&gt;4)-Mur2Ac(oyl-L-Ala-gamma-D-Glu-L-Lys-D-Ala-D-Ala)-di-trans,octa-cis-undecaprenyl diphosphate = [GlcNAc-(1-&gt;4)-Mur2Ac(oyl-L-Ala-gamma-D-Glu-L-Lys-D-Ala-D-Ala)](n+1)-di-trans,octa-cis-undecaprenyl diphosphate + di-trans,octa-cis-undecaprenyl diphosphate + H(+). The protein operates within cell wall biogenesis; peptidoglycan biosynthesis. Its function is as follows. Peptidoglycan polymerase that catalyzes glycan chain elongation from lipid-linked precursors. The sequence is that of Biosynthetic peptidoglycan transglycosylase from Salmonella heidelberg (strain SL476).